The following is a 143-amino-acid chain: Large ribosomal subunit protein eL28z (143 aa).

It belongs to the eukaryotic ribosomal protein eL28 family. Component of the large ribosomal subunit. In terms of tissue distribution, expressed in seedlings, roots, stems, leaves, inflorescences and siliques.

It is found in the cytoplasm. It localises to the nucleus. Its subcellular location is the nucleolus. The protein localises to the nucleoplasm. In terms of biological role, component of the large ribosomal subunit. Essential in leaf polarity establishment, probably having a role for translation in leaf dorsoventral patterning to specify leaf adaxial identity. This is Large ribosomal subunit protein eL28z from Arabidopsis thaliana (Mouse-ear cress).